Consider the following 157-residue polypeptide: 3-hydroxyacyl-[acyl-carrier-protein] dehydratase FabZ (157 aa).

Residue histidine 58 is part of the active site.

It belongs to the thioester dehydratase family. FabZ subfamily.

Its subcellular location is the cytoplasm. It catalyses the reaction a (3R)-hydroxyacyl-[ACP] = a (2E)-enoyl-[ACP] + H2O. In terms of biological role, involved in unsaturated fatty acids biosynthesis. Catalyzes the dehydration of short chain beta-hydroxyacyl-ACPs and long chain saturated and unsaturated beta-hydroxyacyl-ACPs. This chain is 3-hydroxyacyl-[acyl-carrier-protein] dehydratase FabZ, found in Rhizorhabdus wittichii (strain DSM 6014 / CCUG 31198 / JCM 15750 / NBRC 105917 / EY 4224 / RW1) (Sphingomonas wittichii).